Consider the following 859-residue polypeptide: DNA (cytosine-5)-methyltransferase 3B (859 aa).

Residues 1–305 (MKGDSRHLNE…LATFNKLVSY (305 aa)) are interaction with DNMT1 and DNMT3A. Residues 25-226 (GNFSDQSSDT…RDGDSTEYQD (202 aa)) are disordered. A compositionally biased stretch (acidic residues) spans 85–94 (DRDDEVDDGN). The residue at position 96 (Ser-96) is a Phosphoserine. A Glycyl lysine isopeptide (Lys-Gly) (interchain with G-Cter in SUMO2) cross-link involves residue Lys-102. A compositionally biased stretch (basic and acidic residues) spans 103-114 (LTRETKDTRTRS). Thr-112 carries the phosphothreonine modification. At Ser-116 the chain carries Phosphoserine. A compositionally biased stretch (low complexity) spans 167–179 (SSSASTPWSSPAS). Polar residues predominate over residues 189–198 (KSVSTPSVDL). The span at 214 to 226 (AESRDGDSTEYQD) shows a compositional bias: basic and acidic residues. A Phosphoserine modification is found at Ser-216. The PWWP domain maps to 232–290 (IGDLVWGKIKGFSWWPAMVVSWKATSKRQAMPGMRWVQWFGDGKFSEISADKLVALGLF). Residues 348-429 (KPTGIEGLKP…ESRERMASEV (82 aa)) form a disordered region. Basic and acidic residues-rich tracts occupy residues 370-381 (RRSDSRNLEPRR) and 412-426 (GKDR…ERMA). Residue Arg-415 is modified to Citrulline. Positions 428 to 560 (EVTNNKGNLE…LQDFFTTDPD (133 aa)) constitute an ADD domain. The GATA-type; atypical zinc-finger motif lies at 439–469 (RCLSCGKKNPVSFHPLFEGGLCQSCRDRFLE). The interaction with the PRC2/EED-EZH2 complex stretch occupies residues 440–532 (CLSCGKKNPV…LQEPWSCYMC (93 aa)). A PHD-type; atypical zinc finger spans residues 480–536 (QSYCTVCCEGRELLLCSNTSCCRCFCVECLEVLVGAGTAEDAKLQEPWSCYMCLPQR). The SAM-dependent MTase C5-type domain occupies 581–859 (IRVLSLFDGI…APLKDYFACE (279 aa)). Residues 588–592 (DGIAT) and Glu-611 contribute to the S-adenosyl-L-methionine site. Residue Lys-623 forms a Glycyl lysine isopeptide (Lys-Gly) (interchain with G-Cter in SUMO2) linkage. 633 to 635 (DVR) is an S-adenosyl-L-methionine binding site. Cys-657 is a catalytic residue. 838-840 (RSW) is a binding site for S-adenosyl-L-methionine.

Belongs to the class I-like SAM-binding methyltransferase superfamily. C5-methyltransferase family. Interacts with CBX4, DNMT1, DNMT3A, SETDB1, UBE2I9, UBL1 and ZHX1. Interacts with SUV39H1 and BAZ2A/TIP5. Interacts with the PRC2/EED-EZH2 complex. Interacts with UHRF1. Post-translationally, sumoylated. Citrullinated by PADI4.

The protein resides in the nucleus. It carries out the reaction a 2'-deoxycytidine in DNA + S-adenosyl-L-methionine = a 5-methyl-2'-deoxycytidine in DNA + S-adenosyl-L-homocysteine + H(+). With respect to regulation, activated by binding to the regulatory factor DNMT3L. Functionally, required for genome-wide de novo methylation and is essential for the establishment of DNA methylation patterns during development. DNA methylation is coordinated with methylation of histones. May preferentially methylates nucleosomal DNA within the nucleosome core region. May function as transcriptional co-repressor by associating with CBX4 and independently of DNA methylation. Seems to be involved in gene silencing. In association with DNMT1 and via the recruitment of CTCFL/BORIS, involved in activation of BAG1 gene expression by modulating dimethylation of promoter histone H3 at H3K4 and H3K9. Functions as a transcriptional corepressor by associating with ZHX1. Required for DUX4 silencing in somatic cells. The polypeptide is DNA (cytosine-5)-methyltransferase 3B (Dnmt3b) (Mus musculus (Mouse)).